Consider the following 359-residue polypeptide: 3-dehydroquinate synthase (359 aa).

Residues Asp71–Lys76, Gly105–Asp109, Thr129–Thr130, Lys142, and Lys151 each bind NAD(+). Zn(2+) is bound by residues Glu184, His247, and His264.

It belongs to the sugar phosphate cyclases superfamily. Dehydroquinate synthase family. Requires NAD(+) as cofactor. Co(2+) serves as cofactor. Zn(2+) is required as a cofactor.

The protein localises to the cytoplasm. The catalysed reaction is 7-phospho-2-dehydro-3-deoxy-D-arabino-heptonate = 3-dehydroquinate + phosphate. Its pathway is metabolic intermediate biosynthesis; chorismate biosynthesis; chorismate from D-erythrose 4-phosphate and phosphoenolpyruvate: step 2/7. Functionally, catalyzes the conversion of 3-deoxy-D-arabino-heptulosonate 7-phosphate (DAHP) to dehydroquinate (DHQ). The sequence is that of 3-dehydroquinate synthase from Chromobacterium violaceum (strain ATCC 12472 / DSM 30191 / JCM 1249 / CCUG 213 / NBRC 12614 / NCIMB 9131 / NCTC 9757 / MK).